Reading from the N-terminus, the 337-residue chain is Holliday junction branch migration complex subunit RuvB (337 aa).

A large ATPase domain (RuvB-L) region spans residues 4–184; it reads ADRLIQPQVL…FGIPLRLEFY (181 aa). Residues arginine 24, glycine 65, lysine 68, threonine 69, threonine 70, 131–133, arginine 174, tyrosine 184, and arginine 221 contribute to the ATP site; that span reads EDY. Threonine 69 contributes to the Mg(2+) binding site. A small ATPAse domain (RuvB-S) region spans residues 185–255; sequence NVKDLCTIVT…VAQQALDMLD (71 aa). The head domain (RuvB-H) stretch occupies residues 258–337; the sequence is QEGFDYLDRK…FNIITPDVPK (80 aa). Arginine 294, arginine 313, and arginine 318 together coordinate DNA.

It belongs to the RuvB family. As to quaternary structure, homohexamer. Forms an RuvA(8)-RuvB(12)-Holliday junction (HJ) complex. HJ DNA is sandwiched between 2 RuvA tetramers; dsDNA enters through RuvA and exits via RuvB. An RuvB hexamer assembles on each DNA strand where it exits the tetramer. Each RuvB hexamer is contacted by two RuvA subunits (via domain III) on 2 adjacent RuvB subunits; this complex drives branch migration. In the full resolvosome a probable DNA-RuvA(4)-RuvB(12)-RuvC(2) complex forms which resolves the HJ.

It localises to the cytoplasm. The enzyme catalyses ATP + H2O = ADP + phosphate + H(+). Its function is as follows. The RuvA-RuvB-RuvC complex processes Holliday junction (HJ) DNA during genetic recombination and DNA repair, while the RuvA-RuvB complex plays an important role in the rescue of blocked DNA replication forks via replication fork reversal (RFR). RuvA specifically binds to HJ cruciform DNA, conferring on it an open structure. The RuvB hexamer acts as an ATP-dependent pump, pulling dsDNA into and through the RuvAB complex. RuvB forms 2 homohexamers on either side of HJ DNA bound by 1 or 2 RuvA tetramers; 4 subunits per hexamer contact DNA at a time. Coordinated motions by a converter formed by DNA-disengaged RuvB subunits stimulates ATP hydrolysis and nucleotide exchange. Immobilization of the converter enables RuvB to convert the ATP-contained energy into a lever motion, pulling 2 nucleotides of DNA out of the RuvA tetramer per ATP hydrolyzed, thus driving DNA branch migration. The RuvB motors rotate together with the DNA substrate, which together with the progressing nucleotide cycle form the mechanistic basis for DNA recombination by continuous HJ branch migration. Branch migration allows RuvC to scan DNA until it finds its consensus sequence, where it cleaves and resolves cruciform DNA. The sequence is that of Holliday junction branch migration complex subunit RuvB from Shewanella denitrificans (strain OS217 / ATCC BAA-1090 / DSM 15013).